The primary structure comprises 1518 residues: Hormone receptor 4 (1518 aa).

Disordered regions lie at residues 30–50 (RCSS…DLLA), 145–327 (TSST…KLSE), 380–587 (PSRI…QPQA), 672–820 (VGVG…SSVA), and 887–913 (SSNS…EPTD). Polar residues predominate over residues 34–46 (DGESIADTSTSSP). Composition is skewed to low complexity over residues 145-189 (TSST…SSSG) and 208-219 (SSSSAISAAAAS). Positions 238–260 (EGGGPAGDGSGATGGGNTSGGST) are enriched in gly residues. Residues 291-323 (STTTTTGRPTLTPTNGVLSSASAGTGISTGSSA) are compositionally biased toward low complexity. Over residues 400 to 429 (QRERERERDRERDRERERERDRDREREREQ) the composition is skewed to basic and acidic residues. 2 stretches are compositionally biased toward polar residues: residues 430–451 (SISS…QLSH) and 475–489 (RKSS…SQSM). Composition is skewed to low complexity over residues 490–529 (QHLT…PHSL), 546–586 (HHQQ…QQPQ), 681–705 (GSVQ…QTPS), and 738–799 (GQSH…PSSS). Gly residues-rich tracts occupy residues 800 to 812 (SGGG…GVGG) and 892 to 902 (GLGGVGGGMGG). A DNA-binding region (nuclear receptor) is located at residues 918–993 (PLVCMICEDK…QGMVLQAVRE (76 aa)). NR C4-type zinc fingers lie at residues 921-941 (CMIC…CEGC) and 957-976 (CVAD…CQYC). Disordered regions lie at residues 1015–1101 (KHKK…AAVA), 1142–1210 (LLQA…LPPH), and 1341–1371 (KRRG…STPI). Positions 1021–1060 (QKQQQQAAQQQQQQAAAQQQHQQQQQHQQHQQHQQQQLHS) are enriched in low complexity. Residues 1061–1077 (PLHHHHHQGHQSHHAQQ) are compositionally biased toward basic residues. Composition is skewed to low complexity over residues 1078–1101 (QHHP…AAVA) and 1144–1193 (QAPP…HHQQ). Residues 1194–1205 (QGGGGGGAGGGA) show a composition bias toward gly residues. The 269-residue stretch at 1250–1518 (HALGMIQTLI…PFVLNSASIR (269 aa)) folds into the NR LBD domain. A compositionally biased stretch (low complexity) spans 1351–1368 (HGSPASTPLSTPTGTPLS).

This sequence belongs to the nuclear hormone receptor family. NR1 subfamily. During L2 and L3 stages, strong constitutive expression is seen in the ring gland. Lower expression is detected in specific neurons of the central nervous system (CNS) (at protein level).

It is found in the nucleus. Functionally, coordinates growth and maturation by mediating endocrine responses to the attainment of critical weight during larval development. Plays a central role in the genetic cascades triggered by the steroid hormone ecdysone at the onset of metamorphosis, acting as both a repressor of the early ecdysone-induced regulatory genes and an inducer of the ftz-f1 midprepupal competence factor. This chain is Hormone receptor 4 (Hr4), found in Drosophila melanogaster (Fruit fly).